We begin with the raw amino-acid sequence, 698 residues long: Elongation factor G 1 (698 aa).

Residues 8–290 enclose the tr-type G domain; sequence ERYRNIGICA…AVIEFLPSPT (283 aa). Residues 17–24, 88–92, and 142–145 each bind GTP; these read AHVDAGKT, DTPGH, and NKMD.

This sequence belongs to the TRAFAC class translation factor GTPase superfamily. Classic translation factor GTPase family. EF-G/EF-2 subfamily.

It is found in the cytoplasm. Functionally, catalyzes the GTP-dependent ribosomal translocation step during translation elongation. During this step, the ribosome changes from the pre-translocational (PRE) to the post-translocational (POST) state as the newly formed A-site-bound peptidyl-tRNA and P-site-bound deacylated tRNA move to the P and E sites, respectively. Catalyzes the coordinated movement of the two tRNA molecules, the mRNA and conformational changes in the ribosome. The protein is Elongation factor G 1 of Vibrio cholerae serotype O1 (strain ATCC 39315 / El Tor Inaba N16961).